The chain runs to 30 residues: Cliotide T19 (30 aa).

The cyclopeptide (Gly-Asn) cross-link spans 1–30; sequence GSVIKCGESCLLGKCYTPGCTCSRPICKKN. Cystine bridges form between C6–C20, C10–C22, and C15–C27.

Contains 3 disulfide bonds. Post-translationally, this is a cyclic peptide. As to expression, expressed in root nodules but not in seed.

Its function is as follows. Probably participates in a plant defense mechanism. Active against Gram-negative bacterium E.coli ATCC 700926 (MIC=0.6 uM) under low-salt conditions. Not active against Gram-positive bacterium S.aureus ATCC 12600 up to a concentration of 100 uM under low-salt conditions. Exhibits immunomodulatory activity but no cytotoxicity in vitro. This Clitoria ternatea (Butterfly pea) protein is Cliotide T19.